The sequence spans 408 residues: MRKRKQQVYNDNLIVSRSNKRSSTSGKETCYFDPIPVDLVINILSRLSLECIARCRCVSKLWSSIIRRPNYNQLFPVKSSATPRLLFVFKVARELFFNSSPQHFNPNNSSLVATSLQKTSSTRFSQLCRPVHGLICSQHIEENYLFALISNPTTGEYIALPKQRMEEMNSETIIEKVRYSFGYDPIDKQFKVLRITWLHRGSHEWSSEYQVLTLGFGNISWRNTQCCVVHYLLEDSGICINGVLYYPARLDNRKYTIVCFDVMTEKFSFTSIDKDMTIMTNLSFSLIDYKGKLGACICDHTLFELWVLENAEEHKWSKNIYNMPYSRSRLEETSYLKCAGMIASGEILLYPISSANTSTDARYPFIYYYNLERNIITRVTLQVPILKQFTYARLFYTFSNFLENVTLI.

Residues 29 to 74 (TCYFDPIPVDLVINILSRLSLECIARCRCVSKLWSSIIRRPNYNQL) form the F-box domain.

This Arabidopsis thaliana (Mouse-ear cress) protein is Putative F-box protein At1g53550.